The chain runs to 332 residues: tRNA-dihydrouridine(20/20a) synthase (332 aa).

FMN is bound by residues 22–24 (PMM) and glutamine 75. The Proton donor role is filled by cysteine 105. FMN-binding positions include lysine 144, histidine 177, 217 to 219 (NGG), and 239 to 240 (GR).

This sequence belongs to the Dus family. DusA subfamily. It depends on FMN as a cofactor.

It carries out the reaction 5,6-dihydrouridine(20) in tRNA + NADP(+) = uridine(20) in tRNA + NADPH + H(+). The catalysed reaction is 5,6-dihydrouridine(20) in tRNA + NAD(+) = uridine(20) in tRNA + NADH + H(+). It catalyses the reaction 5,6-dihydrouridine(20a) in tRNA + NADP(+) = uridine(20a) in tRNA + NADPH + H(+). The enzyme catalyses 5,6-dihydrouridine(20a) in tRNA + NAD(+) = uridine(20a) in tRNA + NADH + H(+). Catalyzes the synthesis of 5,6-dihydrouridine (D), a modified base found in the D-loop of most tRNAs, via the reduction of the C5-C6 double bond in target uridines. Specifically modifies U20 and U20a in tRNAs. The polypeptide is tRNA-dihydrouridine(20/20a) synthase (Xylella fastidiosa (strain Temecula1 / ATCC 700964)).